A 154-amino-acid polypeptide reads, in one-letter code: Protein X (154 aa).

The tract at residues Pro-68–Phe-117 is mitochondrial targeting sequence.

This sequence belongs to the orthohepadnavirus protein X family. In terms of assembly, may form homodimer. May interact with host CEBPA, CFLAR, CREB1, DDB1, E4F1, HBXIP, HSPD1/HSP60, NFKBIA, POLR2E and SMAD4. Interacts with host SMC5-SMC6 complex and induces its degradation. Interacts with host TRPC4AP; leading to prevent ubiquitination of TRPC4AP. Interacts with host PLSCR1; this interaction promotes ubiquitination and degradation of HBx and impairs HBx-mediated cell proliferation. In terms of processing, a fraction may be phosphorylated in insect cells and HepG2 cells, a human hepatoblastoma cell line. Phosphorylated in vitro by host protein kinase C or mitogen-activated protein kinase. N-acetylated in insect cells.

The protein localises to the host cytoplasm. It localises to the host nucleus. It is found in the host mitochondrion. In terms of biological role, multifunctional protein that plays a role in silencing host antiviral defenses and promoting viral transcription. Does not seem to be essential for HBV infection. May be directly involved in development of cirrhosis and liver cancer (hepatocellular carcinoma). Most of cytosolic activities involve modulation of cytosolic calcium. The effect on apoptosis is controversial depending on the cell types in which the studies have been conducted. May induce apoptosis by localizing in mitochondria and causing loss of mitochondrial membrane potential. May also modulate apoptosis by binding host CFLAR, a key regulator of the death-inducing signaling complex (DISC). Promotes viral transcription by using the host E3 ubiquitin ligase DDB1 to target the SMC5-SMC6 complex to proteasomal degradation. This host complex would otherwise bind to viral episomal DNA, and prevents its transcription. Moderately stimulates transcription of many different viral and cellular transcription elements. Promoters and enhancers stimulated by HBx contain DNA binding sites for NF-kappa-B, AP-1, AP-2, c-EBP, ATF/CREB, or the calcium-activated factor NF-AT. The protein is Protein X of Hepatitis B virus genotype H subtype adw4 (isolate Nicaragua/2928Nic/1997) (HBV-H).